The primary structure comprises 129 residues: uncharacterized protein (129 aa).

This is an uncharacterized protein from Saccharomyces cerevisiae (strain ATCC 204508 / S288c) (Baker's yeast).